Consider the following 297-residue polypeptide: Carbamate kinase (297 aa).

The protein belongs to the carbamate kinase family.

Its subcellular location is the cytoplasm. It catalyses the reaction hydrogencarbonate + NH4(+) + ATP = carbamoyl phosphate + ADP + H2O + H(+). The enzyme catalyses carbamate + ATP = carbamoyl phosphate + ADP. It carries out the reaction hydrogencarbonate + NH4(+) = carbamate + H2O + H(+). The protein operates within nitrogen metabolism; (S)-allantoin degradation. Functionally, kinase involved in the anaerobic nitrogen utilization via the assimilation of allantoin. Catalyzes the transfer of a phosphate group from carbamoyl phosphate to ADP to produce ATP and leave carbamate, which spontaneously hydrolyzes to ammonia and hydrogencarbonate. The polypeptide is Carbamate kinase (Escherichia coli O6:H1 (strain CFT073 / ATCC 700928 / UPEC)).